The following is a 167-amino-acid chain: Phospholipase A2 (167 aa).

Residues W38, G40, and G42 each contribute to the Ca(2+) site. 5 disulfide bridges follow: C39–C61, C60–C99, C67–C92, C90–C127, and C132–C144. An N-linked (GlcNAc...) asparagine glycan is attached at N47. The active site involves H64. D65 contributes to the Ca(2+) binding site. The propeptide occupies 136 to 140 (ARSAR).

The protein belongs to the phospholipase A2 family. Group III subfamily. In terms of assembly, heterodimer composed of a large subunit and a small subunit; disulfide-linked. Ca(2+) serves as cofactor. As to expression, expressed by the venom gland.

The protein resides in the secreted. The enzyme catalyses a 1,2-diacyl-sn-glycero-3-phosphocholine + H2O = a 1-acyl-sn-glycero-3-phosphocholine + a fatty acid + H(+). Functionally, phospholipase toxin, which catalyzes the calcium-dependent hydrolysis of the 2-acyl groups in 3-sn-phosphoglycerides. Inhibits both skeletal (RYR1) and cardiac (RYR2) ryanodine receptors (calcium release channels). Probably blocks ryanodine receptors by generating a lipid product. Shows hemolytic activity, but it is not know if it is direct or indirect. In Hottentotta tamulus (Eastern Indian scorpion), this protein is Phospholipase A2.